A 204-amino-acid chain; its full sequence is Phosphatidylserine decarboxylase proenzyme (204 aa).

The active-site Schiff-base intermediate with substrate; via pyruvic acid is serine 169. Serine 169 is modified (pyruvic acid (Ser); by autocatalysis).

The protein belongs to the phosphatidylserine decarboxylase family. PSD-A subfamily. In terms of assembly, heterodimer of a large membrane-associated beta subunit and a small pyruvoyl-containing alpha subunit. The cofactor is pyruvate. Is synthesized initially as an inactive proenzyme. Formation of the active enzyme involves a self-maturation process in which the active site pyruvoyl group is generated from an internal serine residue via an autocatalytic post-translational modification. Two non-identical subunits are generated from the proenzyme in this reaction, and the pyruvate is formed at the N-terminus of the alpha chain, which is derived from the carboxyl end of the proenzyme. The post-translation cleavage follows an unusual pathway, termed non-hydrolytic serinolysis, in which the side chain hydroxyl group of the serine supplies its oxygen atom to form the C-terminus of the beta chain, while the remainder of the serine residue undergoes an oxidative deamination to produce ammonia and the pyruvoyl prosthetic group on the alpha chain.

It is found in the cell membrane. It catalyses the reaction a 1,2-diacyl-sn-glycero-3-phospho-L-serine + H(+) = a 1,2-diacyl-sn-glycero-3-phosphoethanolamine + CO2. The protein operates within phospholipid metabolism; phosphatidylethanolamine biosynthesis; phosphatidylethanolamine from CDP-diacylglycerol: step 2/2. Catalyzes the formation of phosphatidylethanolamine (PtdEtn) from phosphatidylserine (PtdSer). This chain is Phosphatidylserine decarboxylase proenzyme, found in Solibacter usitatus (strain Ellin6076).